Here is a 554-residue protein sequence, read N- to C-terminus: Probable oligo-1,6-glucosidase 3 (554 aa).

The active-site Nucleophile is Asp199. Glu256 (proton donor) is an active-site residue.

It belongs to the glycosyl hydrolase 13 family.

The protein resides in the cytoplasm. The catalysed reaction is Hydrolysis of (1-&gt;6)-alpha-D-glucosidic linkages in some oligosaccharides produced from starch and glycogen by alpha-amylase, and in isomaltose.. The sequence is that of Probable oligo-1,6-glucosidase 3 (yugT) from Bacillus subtilis (strain 168).